Consider the following 266-residue polypeptide: UPF0354 protein LMHCC_0955 (266 aa).

The protein belongs to the UPF0354 family.

This chain is UPF0354 protein LMHCC_0955, found in Listeria monocytogenes serotype 4a (strain HCC23).